Here is a 789-residue protein sequence, read N- to C-terminus: MAATTANPEMTSDVPSLGPAIASGNSGPGIQGGGAIVQRAIKRRPGLDFDDDGEGNSKFLRCDDDQMSNDKERFARSDDEQSSADKERLARENHSEIERRRRNKMTAYITELSDMVPTCSALARKPDKLTILRMAVSHMKSLRGTGNTSTDGSYKPSFLTDQELKHLILEAADGFLFIVSCETGRVVYVSDSVTPVLNQPQSEWFGSTLYDQVHPDDVDKLREQLSTSENALTGRILDLKTGTVKKEGQQSSMRMCMGSRRSFICRMRCGSSSVDPVSVNRLSFVRNRCRNGLGSVKDGEPHFVVVHCTGYIKAWPPAGVSLPDDDPEAGQGSKFCLVAIGRLQVTSSPNCTDMSNVCQPTEFISRHNIEGIFTFVDHRCVATVGYQPQELLGKNIVEFCHPEDQQLLRDSFQQVVKLKGQVLSVMFRFRSKNQEWLWMRTSSFTFQNPYSDEIEYIICTNTNVKNSSQEPRPTLSNTIQRPQLGPTANLPLEMGSGQLAPRQQQQQTELDMVPGRDGLASYNHSQVVQPVTTTGPEHSKPLEKSDGLFAQDRDPRFSEIYHNINADQSKGISSSTVPATQQLFSQGNTFPPTPRPAENFRNSGLAPPVTIVQPSASAGQMLAQISRHSNPTQGATPTWTPTTRSGFSAQQVATQATAKTRTSQFGVGSFQTPSSFSSMSLPGAPTASPGAAAYPSLTNRGSNFAPETGQTAGQFQTRTAEGVGVWPQWQGQQPHHRSSSSEQHVQQPPAQQPGQPEVFQEMLSMLGDQSNSYNNEEFPDLTMFPPFSE.

Residues Met1–Val14 show a composition bias toward polar residues. Residues Met1 to Ile97 form a disordered region. Ala2 is subject to N-acetylalanine. Residues Ser26–Ala35 show a composition bias toward gly residues. Residue Lys58 forms a Glycyl lysine isopeptide (Lys-Gly) (interchain with G-Cter in SUMO2) linkage. Residues Leu60 to Ile97 show a composition bias toward basic and acidic residues. Ser77 is subject to Phosphoserine. Residues Arg88–Lys128 are DNA-binding. One can recognise a bHLH domain in the interval Leu89–Leu142. Positions Leu112–Ile168 are required for heterodimer formation with HIF1A. Positions Leu112–Ile264 are required for heterodimer formation with EPAS1. 2 consecutive PAS domains span residues Asp161–Arg235 and Pro349–Lys419. Positions Leu167–Ala171 are mediates the transcription activity and dimerization of the AHR:ARNT complex. The PAC domain occupies Ser424–Ser467. The span at Lys465–Arg481 shows a compositional bias: polar residues. 2 disordered regions span residues Lys465–Leu492 and Thr672–Glu789. Residues Thr672–Ser696 show a composition bias toward low complexity. Over residues Thr708 to Thr719 the composition is skewed to polar residues. Low complexity-rich tracts occupy residues Val723–Gln733 and Gln743–Pro756.

In terms of assembly, monomer. Homodimer only upon binding to a DNA. Efficient DNA binding requires dimerization with another bHLH protein. Interacts with TACC3. Interacts with HIF1A, EPAS1, NPAS1 and NPAS3; forms a heterodimer that binds core DNA sequence 5'-TACGTG-3' within the hypoxia response element (HRE) of target gene promoters. Forms a heterodimer with AHRR, as well as with other bHLH proteins. Interacts with NOCA7. Interacts with TACC3. Interacts with AHR; the heterodimer ARNT:AHR binds to core DNA sequence 5'-TGCGTG-3' within the dioxin response element (DRE) of target gene promoters and activates their transcription. Interacts with SIM1 and NPAS4.

It is found in the nucleus. Required for activity of the AHR. Upon ligand binding, AHR translocates into the nucleus, where it heterodimerizes with ARNT and induces transcription by binding to xenobiotic response elements (XRE). Not required for the ligand-binding subunit to translocate from the cytosol to the nucleus after ligand binding. The complex initiates transcription of genes involved in the regulation of a variety of biological processes, including angiogenesis, hematopoiesis, drug and lipid metabolism, cell motility and immune modulation. The heterodimer binds to core DNA sequence 5'-TACGTG-3' within the hypoxia response element (HRE) of target gene promoters and functions as a transcriptional regulator of the adaptive response to hypoxia. The heterodimer ARNT:AHR binds to core DNA sequence 5'-TGCGTG-3' within the dioxin response element (DRE) of target gene promoters and activates their transcription. The chain is Aryl hydrocarbon receptor nuclear translocator from Homo sapiens (Human).